A 362-amino-acid polypeptide reads, in one-letter code: Protein RecA (362 aa).

Residue 67–74 (GPESSGKT) coordinates ATP. Positions 337–356 (VADAPADSAPAPVAAVAPKA) are enriched in low complexity. Positions 337 to 362 (VADAPADSAPAPVAAVAPKASARKSA) are disordered.

Belongs to the RecA family.

It is found in the cytoplasm. Can catalyze the hydrolysis of ATP in the presence of single-stranded DNA, the ATP-dependent uptake of single-stranded DNA by duplex DNA, and the ATP-dependent hybridization of homologous single-stranded DNAs. It interacts with LexA causing its activation and leading to its autocatalytic cleavage. This is Protein RecA from Clavibacter michiganensis subsp. michiganensis (strain NCPPB 382).